Here is a 245-residue protein sequence, read N- to C-terminus: Orotidine 5'-phosphate decarboxylase (245 aa).

Residues Asp-22, Lys-44, 71 to 80, Thr-131, Arg-192, Gln-201, Gly-221, and Arg-222 contribute to the substrate site; that span reads DLKFHDIPNT. Lys-73 acts as the Proton donor in catalysis.

It belongs to the OMP decarboxylase family. Type 1 subfamily. As to quaternary structure, homodimer.

The enzyme catalyses orotidine 5'-phosphate + H(+) = UMP + CO2. The protein operates within pyrimidine metabolism; UMP biosynthesis via de novo pathway; UMP from orotate: step 2/2. Catalyzes the decarboxylation of orotidine 5'-monophosphate (OMP) to uridine 5'-monophosphate (UMP). This Klebsiella pneumoniae (strain 342) protein is Orotidine 5'-phosphate decarboxylase.